A 129-amino-acid polypeptide reads, in one-letter code: Transcription antitermination protein NusB (129 aa).

Belongs to the NusB family.

In terms of biological role, involved in transcription antitermination. Required for transcription of ribosomal RNA (rRNA) genes. Binds specifically to the boxA antiterminator sequence of the ribosomal RNA (rrn) operons. In Staphylococcus epidermidis (strain ATCC 35984 / DSM 28319 / BCRC 17069 / CCUG 31568 / BM 3577 / RP62A), this protein is Transcription antitermination protein NusB.